A 397-amino-acid polypeptide reads, in one-letter code: Phosphoglycerate kinase (397 aa).

Residues 25–27 (DLN), Arg-41, 64–67 (HLGR), Arg-118, and Arg-151 each bind substrate. ATP contacts are provided by residues Lys-202, Glu-324, and 350 to 353 (GGDT).

This sequence belongs to the phosphoglycerate kinase family. In terms of assembly, monomer.

Its subcellular location is the cytoplasm. It carries out the reaction (2R)-3-phosphoglycerate + ATP = (2R)-3-phospho-glyceroyl phosphate + ADP. Its pathway is carbohydrate degradation; glycolysis; pyruvate from D-glyceraldehyde 3-phosphate: step 2/5. The polypeptide is Phosphoglycerate kinase (Paracidovorax citrulli (strain AAC00-1) (Acidovorax citrulli)).